A 370-amino-acid chain; its full sequence is Flagellar P-ring protein (370 aa).

The first 27 residues, 1 to 27 (MPARPIPVPLLALALAAALAVPSPAAA), serve as a signal peptide directing secretion.

Belongs to the FlgI family. In terms of assembly, the basal body constitutes a major portion of the flagellar organelle and consists of four rings (L,P,S, and M) mounted on a central rod.

It is found in the periplasm. Its subcellular location is the bacterial flagellum basal body. Assembles around the rod to form the L-ring and probably protects the motor/basal body from shearing forces during rotation. This chain is Flagellar P-ring protein, found in Anaeromyxobacter sp. (strain K).